We begin with the raw amino-acid sequence, 209 residues long: Abscisic acid receptor PYL3 (209 aa).

The tract at residues 1 to 23 is disordered; the sequence is MNLAPIHDPSSSSTTTTSSSTPY. Positions 10 to 21 are enriched in low complexity; sequence SSSSTTTTSSST. Residues 43 to 205 form an START-like region; the sequence is FPRSPNTCTS…NLQNLAVIST (163 aa). Residues Lys79, 113-118, 140-146, and Glu170 contribute to the abscisate site; these read ASTSVE and RLNNYRS. Positions 109-113 match the Gate loop motif; it reads SGLPA. The Latch loop motif lies at 139 to 141; the sequence is HRL.

The protein belongs to the PYR/PYL/RCAR abscisic acid intracellular receptor family. As to quaternary structure, homodimer and monomer. Binds ABA on one subunit only. ABA-binding favors monomer and trans-homodimer intermediate, and increases PP2C inhibitor activity. Binds both (-)-ABA and (+)-ABA. Binds to CARs protein in an ABA-independent manner, both at the plasma membrane and in the nucleus. Interacts with HAB1, ABI1 and ABI2, and possibly with other PP2Cs.

It is found in the cytoplasm. The protein localises to the nucleus. It localises to the cell membrane. Receptor for abscisic acid (ABA) required for ABA-mediated responses such as stomatal closure and germination inhibition. Inhibits the activity of group-A protein phosphatases type 2C (PP2Cs) when activated by ABA. Can be activated by both (-)-ABA and (+)-ABA. This Arabidopsis thaliana (Mouse-ear cress) protein is Abscisic acid receptor PYL3 (PYL3).